The sequence spans 237 residues: Ditrans,polycis-undecaprenyl-diphosphate synthase ((2E,6E)-farnesyl-diphosphate specific) (237 aa).

D11 is a catalytic residue. D11 is a binding site for Mg(2+). Substrate contacts are provided by residues G12–R15, W16, R24, H28, and S56–E58. The active-site Proton acceptor is N59. Substrate-binding positions include R62, R179, and R185 to S187. A Mg(2+)-binding site is contributed by E198.

Belongs to the UPP synthase family. Homodimer. Mg(2+) is required as a cofactor.

The catalysed reaction is 8 isopentenyl diphosphate + (2E,6E)-farnesyl diphosphate = di-trans,octa-cis-undecaprenyl diphosphate + 8 diphosphate. Its function is as follows. Catalyzes the sequential condensation of isopentenyl diphosphate (IPP) with (2E,6E)-farnesyl diphosphate (E,E-FPP) to yield (2Z,6Z,10Z,14Z,18Z,22Z,26Z,30Z,34E,38E)-undecaprenyl diphosphate (di-trans,octa-cis-UPP). UPP is the precursor of glycosyl carrier lipid in the biosynthesis of bacterial cell wall polysaccharide components such as peptidoglycan and lipopolysaccharide. This Coxiella burnetii (strain RSA 493 / Nine Mile phase I) protein is Ditrans,polycis-undecaprenyl-diphosphate synthase ((2E,6E)-farnesyl-diphosphate specific).